We begin with the raw amino-acid sequence, 450 residues long: MENIHDLWDRVLGEIERKISKPSFETWLKSTKAHSLRGDTLVIVAPNEFARDWLDSRYSHLIAETIYAITGEELAVKFIIPPNQADEKLELPSSAKKQRKPYEEANDFPQSMLNPKYTFDTFVIGSGNRFAHAASLAVAEAPAKAYNPLFIYGGVGLGKTHLMHAIGHYVIEHNPSAKVVYLSSEKFTNEFINAIRDNRPDDFRNKYRNVDVLLIDDIQFLAGKEQTQEEFFHTFNTLHEESKQIVISSDRPPKEIPTLEDRLRSRFEWGLITDITPPDLETRIAILRKKAKAEGFDIPNEVMLYIANQIDSNIRELEGALIRVVAYSSLINKEITADLAAEALKDIIPSAKPKVITIQDIQRVVGQHFNIKLEDFKAKKRTKSVAFPRQIAMYLSRELTDCSLPKIGDEFGGRDHTTVIHAHEKISKLLQTDTQLQKHLKEIQEKLKQL.

A domain I, interacts with DnaA modulators region spans residues 1 to 84 (MENIHDLWDR…AVKFIIPPNQ (84 aa)). Residues 84–111 (QADEKLELPSSAKKQRKPYEEANDFPQS) are domain II. The domain III, AAA+ region stretch occupies residues 112–328 (MLNPKYTFDT…GALIRVVAYS (217 aa)). ATP contacts are provided by glycine 156, glycine 158, lysine 159, and threonine 160. The segment at 329–450 (SLINKEITAD…KEIQEKLKQL (122 aa)) is domain IV, binds dsDNA.

This sequence belongs to the DnaA family. Oligomerizes as a right-handed, spiral filament on DNA at oriC.

It is found in the cytoplasm. Plays an essential role in the initiation and regulation of chromosomal replication. ATP-DnaA binds to the origin of replication (oriC) to initiate formation of the DNA replication initiation complex once per cell cycle. Binds the DnaA box (a 9 base pair repeat at the origin) and separates the double-stranded (ds)DNA. Forms a right-handed helical filament on oriC DNA; dsDNA binds to the exterior of the filament while single-stranded (ss)DNA is stabiized in the filament's interior. The ATP-DnaA-oriC complex binds and stabilizes one strand of the AT-rich DNA unwinding element (DUE), permitting loading of DNA polymerase. After initiation quickly degrades to an ADP-DnaA complex that is not apt for DNA replication. Binds acidic phospholipids. In Geobacillus thermodenitrificans (strain NG80-2), this protein is Chromosomal replication initiator protein DnaA.